The primary structure comprises 192 residues: Anthranilate synthase component 2 (192 aa).

In terms of domain architecture, Glutamine amidotransferase type-1 spans 1 to 192; sequence MIVLVNNRDS…KNFVEMSRNG (192 aa). 50-52 is a binding site for L-glutamine; it reads GPG. The Nucleophile; for GATase activity role is filled by Cys78. Residues Gln82 and 127-128 each bind L-glutamine; that span reads SL. Active-site for GATase activity residues include His165 and Glu167.

In terms of assembly, heterotetramer consisting of two non-identical subunits: a beta subunit (TrpG) and a large alpha subunit (TrpE).

The enzyme catalyses chorismate + L-glutamine = anthranilate + pyruvate + L-glutamate + H(+). It functions in the pathway amino-acid biosynthesis; L-tryptophan biosynthesis; L-tryptophan from chorismate: step 1/5. Part of a heterotetrameric complex that catalyzes the two-step biosynthesis of anthranilate, an intermediate in the biosynthesis of L-tryptophan. In the first step, the glutamine-binding beta subunit (TrpG) of anthranilate synthase (AS) provides the glutamine amidotransferase activity which generates ammonia as a substrate that, along with chorismate, is used in the second step, catalyzed by the large alpha subunit of AS (TrpE) to produce anthranilate. In the absence of TrpG, TrpE can synthesize anthranilate directly from chorismate and high concentrations of ammonia. The protein is Anthranilate synthase component 2 (trpG) of Thermococcus kodakarensis (strain ATCC BAA-918 / JCM 12380 / KOD1) (Pyrococcus kodakaraensis (strain KOD1)).